A 206-amino-acid chain; its full sequence is Small ribosomal subunit protein uS4 (206 aa).

Residues 96–156 form the S4 RNA-binding domain; it reads GRLDNVVYRM…EKSKKQARIK (61 aa).

Belongs to the universal ribosomal protein uS4 family. Part of the 30S ribosomal subunit. Contacts protein S5. The interaction surface between S4 and S5 is involved in control of translational fidelity.

One of the primary rRNA binding proteins, it binds directly to 16S rRNA where it nucleates assembly of the body of the 30S subunit. In terms of biological role, with S5 and S12 plays an important role in translational accuracy. The sequence is that of Small ribosomal subunit protein uS4 from Mannheimia succiniciproducens (strain KCTC 0769BP / MBEL55E).